A 1373-amino-acid chain; its full sequence is DNA-directed RNA polymerase subunit beta (1373 aa).

Belongs to the RNA polymerase beta chain family. As to quaternary structure, the RNAP catalytic core consists of 2 alpha, 1 beta, 1 beta' and 1 omega subunit. When a sigma factor is associated with the core the holoenzyme is formed, which can initiate transcription.

It carries out the reaction RNA(n) + a ribonucleoside 5'-triphosphate = RNA(n+1) + diphosphate. Functionally, DNA-dependent RNA polymerase catalyzes the transcription of DNA into RNA using the four ribonucleoside triphosphates as substrates. The polypeptide is DNA-directed RNA polymerase subunit beta (Rickettsia felis (strain ATCC VR-1525 / URRWXCal2) (Rickettsia azadi)).